The sequence spans 1456 residues: Sterol 3-beta-glucosyltransferase (1456 aa).

Residues 60–70 (ESDEEDGDEVE) show a composition bias toward acidic residues. Disordered regions lie at residues 60-113 (ESDE…SISH) and 128-156 (LSPHSLCHTSSHEASRRGSAEQPSRTQSE). The span at 71-104 (TPSTTTTAVSPSATMSAPSPTATAPTPHSGTHTP) shows a compositional bias: low complexity. A compositionally biased stretch (basic and acidic residues) spans 137 to 146 (SSHEASRRGS). Residues 200–247 (QKLKGFAALDVDEQLIADYPVWLLKNVLIQGHLYITAKHMCFLSYLPR) form the GRAM 1 domain. Residues 251–351 (ANIRSGTLVK…WVKALQKEIF (101 aa)) enclose the PH domain. Disordered stretches follow at residues 462 to 512 (HSAH…PRLP) and 524 to 776 (DKCD…QDTF). Basic and acidic residues predominate over residues 496-508 (QPHERDEKRDSKL). Over residues 556 to 567 (LASQRTSSSTLF) the composition is skewed to polar residues. Low complexity-rich tracts occupy residues 576-606 (SQPTTPGVHAPGSSTPGGSYGTTTPGTPASA) and 647-676 (GGATSSGAATGATTPGGAAAPGSTGNSSPG). The span at 677–696 (TPGGLGGPGAVGAGGPGVMG) shows a compositional bias: gly residues. Positions 719-735 (APHDPAAAAAAADAAAP) are enriched in low complexity. The region spanning 827–893 (ERFQKRFALG…KVVENATKDS (67 aa)) is the GRAM 2 domain. Positions 1004, 1005, 1007, 1279, 1307, 1310, 1323, 1326, 1327, 1328, 1347, and 1348 each coordinate UDP-alpha-D-glucose.

This sequence belongs to the glycosyltransferase 28 family.

The protein resides in the cytoplasm. The protein localises to the membrane. The enzyme catalyses a sterol + UDP-alpha-D-glucose = a sterol 3-beta-D-glucoside + UDP + H(+). It catalyses the reaction ergosterol + UDP-alpha-D-glucose = ergosteryl 3-beta-D-glucoside + UDP + H(+). Functionally, sterol glycosyltransferase responsible for the glycosylation of ergosterol to form ergosterol-glucoside. The chain is Sterol 3-beta-glucosyltransferase from Yarrowia lipolytica (strain CLIB 122 / E 150) (Yeast).